The sequence spans 274 residues: uncharacterized protein (274 aa).

The N-terminal stretch at M1 to A30 is a signal peptide.

To M.tuberculosis Rv1403c.

This is an uncharacterized protein from Mycobacterium bovis (strain ATCC BAA-935 / AF2122/97).